The sequence spans 115 residues: Large ribosomal subunit protein bL19 (115 aa).

Belongs to the bacterial ribosomal protein bL19 family.

This protein is located at the 30S-50S ribosomal subunit interface and may play a role in the structure and function of the aminoacyl-tRNA binding site. The protein is Large ribosomal subunit protein bL19 of Parabacteroides distasonis (strain ATCC 8503 / DSM 20701 / CIP 104284 / JCM 5825 / NCTC 11152).